We begin with the raw amino-acid sequence, 753 residues long: Synaptotagmin-like protein 5 (753 aa).

A RabBD domain is found at 7–123 (FINLSFLLDH…IISGEWFLEE (117 aa)). The segment at 64-106 (CVHCHKTLGLIFDRGDPCQACSLRVCSECRVTGLDGSWKCTVC) adopts an FYVE-type zinc-finger fold. Disordered regions lie at residues 145–279 (RRSP…SREH), 297–359 (LTKS…LNSL), and 380–404 (LASGLSTNSQAGSDRKRSYLNVPDA). Position 147 is a phosphoserine (serine 147). Polar residues predominate over residues 150–174 (SEETQNQEQAQQCVDKSDTLSSVRQ). Over residues 195-206 (TRGEIRTPKPES) the composition is skewed to basic and acidic residues. Positions 214–223 (LDSQNLQSFK) are enriched in polar residues. Over residues 224-237 (SASGSDRGSTTSSD) the composition is skewed to low complexity. Residues 249–275 (KSSYSNGGIPVTQRSPVPSAHSVTSIN) are compositionally biased toward polar residues. Residues 380-391 (LASGLSTNSQAG) show a composition bias toward polar residues. 2 consecutive C2 domains span residues 429–550 (VTGE…DEWF) and 597–717 (KRGK…VDWM).

As to quaternary structure, binds RAB27A that has been activated by GTP-binding.

It localises to the membrane. May act as Rab effector protein and play a role in vesicle trafficking. Binds phospholipids. The polypeptide is Synaptotagmin-like protein 5 (Sytl5) (Mus musculus (Mouse)).